We begin with the raw amino-acid sequence, 201 residues long: Nucleoside triphosphate pyrophosphatase (201 aa).

The Proton acceptor role is filled by D77.

It belongs to the Maf family. A divalent metal cation serves as cofactor.

Its subcellular location is the cytoplasm. It catalyses the reaction a ribonucleoside 5'-triphosphate + H2O = a ribonucleoside 5'-phosphate + diphosphate + H(+). The catalysed reaction is a 2'-deoxyribonucleoside 5'-triphosphate + H2O = a 2'-deoxyribonucleoside 5'-phosphate + diphosphate + H(+). Nucleoside triphosphate pyrophosphatase. May have a dual role in cell division arrest and in preventing the incorporation of modified nucleotides into cellular nucleic acids. The sequence is that of Nucleoside triphosphate pyrophosphatase from Rickettsia akari (strain Hartford).